Here is a 427-residue protein sequence, read N- to C-terminus: Serine hydroxymethyltransferase (427 aa).

(6S)-5,6,7,8-tetrahydrofolate is bound at residue 120–122 (GHI). At lysine 226 the chain carries N6-(pyridoxal phosphate)lysine.

The protein belongs to the SHMT family. Homodimer. Pyridoxal 5'-phosphate serves as cofactor.

Its subcellular location is the cytoplasm. Its pathway is amino-acid biosynthesis; glycine biosynthesis; glycine from L-serine: step 1/1. In terms of biological role, catalyzes the reversible interconversion of serine and glycine with a modified folate serving as the one-carbon carrier. Also exhibits a pteridine-independent aldolase activity toward beta-hydroxyamino acids, producing glycine and aldehydes, via a retro-aldol mechanism. The chain is Serine hydroxymethyltransferase from Pyrococcus horikoshii (strain ATCC 700860 / DSM 12428 / JCM 9974 / NBRC 100139 / OT-3).